The following is a 154-amino-acid chain: uncharacterized protein (154 aa).

Helical transmembrane passes span 19 to 39 (LFAY…GLLL) and 51 to 71 (ADQV…LLFA).

Its subcellular location is the cell membrane. This is an uncharacterized protein from Mycobacterium tuberculosis (strain CDC 1551 / Oshkosh).